The sequence spans 537 residues: Putative cysteine ligase BshC (537 aa).

The stretch at 383 to 451 (MERTQKLLKQ…EVKENQDNFN (69 aa)) forms a coiled coil.

Belongs to the BshC family.

Functionally, involved in bacillithiol (BSH) biosynthesis. May catalyze the last step of the pathway, the addition of cysteine to glucosamine malate (GlcN-Mal) to generate BSH. This chain is Putative cysteine ligase BshC, found in Staphylococcus haemolyticus (strain JCSC1435).